A 104-amino-acid polypeptide reads, in one-letter code: Protein translation factor SUI1 homolog (104 aa).

Belongs to the SUI1 family.

This chain is Protein translation factor SUI1 homolog, found in Ignicoccus hospitalis (strain KIN4/I / DSM 18386 / JCM 14125).